We begin with the raw amino-acid sequence, 262 residues long: Beta-phosphoglucomutase (262 aa).

Catalysis depends on Asp-29, which acts as the Nucleophile. Mg(2+)-binding residues include Asp-29 and Asp-31. At Asp-29 the chain carries 4-aspartylphosphate. The Proton donor/acceptor role is filled by Asp-31. Residues Asp-31, Gly-79, Arg-82, Ser-157, and Asn-159 each coordinate beta-D-glucose 6-phosphate. Residue Asp-215 participates in Mg(2+) binding.

This sequence belongs to the HAD-like hydrolase superfamily. CbbY/CbbZ/Gph/YieH family. Monomer. The cofactor is Mg(2+). Post-translationally, autophosphorylated.

It catalyses the reaction beta-D-glucose 1-phosphate = beta-D-glucose 6-phosphate. Catalyzes the interconversion of D-glucose 1-phosphate (G1P) and D-glucose 6-phosphate (G6P), forming beta-D-glucose 1,6-(bis)phosphate (beta-G16P) as an intermediate. The protein is Beta-phosphoglucomutase of Mycobacterium bovis (strain ATCC BAA-935 / AF2122/97).